Reading from the N-terminus, the 533-residue chain is Beta-1,4 N-acetylgalactosaminyltransferase 1 (533 aa).

Residues 1–7 (MRLDRRA) lie on the Cytoplasmic side of the membrane. Residues 8–25 (LYALVLLLACASLGLLYS) traverse the membrane as a helical; Signal-anchor for type II membrane protein segment. Over 26–533 (STRNAPSLPN…KHRLQCMTAE (508 aa)) the chain is Lumenal. 3 N-linked (GlcNAc...) asparagine glycosylation sites follow: Asn79, Asn179, and Asn274. Cysteines 429 and 476 form a disulfide.

The protein belongs to the glycosyltransferase 2 family. In terms of assembly, homodimer; disulfide-linked. In terms of tissue distribution, most abundant in brain, liver, lung, spleen and testis.

The protein resides in the golgi apparatus membrane. The enzyme catalyses a ganglioside GM3 (d18:1(4E)) + UDP-N-acetyl-alpha-D-galactosamine = a ganglioside GM2 (d18:1(4E)) + UDP + H(+). It carries out the reaction a ganglioside GD3 (d18:1(4E)) + UDP-N-acetyl-alpha-D-galactosamine = a ganglioside GD2 (d18:1(4E)) + UDP + H(+). The catalysed reaction is a ganglioside GM3 + UDP-N-acetyl-alpha-D-galactosamine = a ganglioside GM2 + UDP + H(+). It catalyses the reaction a ganglioside GD3 + UDP-N-acetyl-alpha-D-galactosamine = a ganglioside GD2 + UDP + H(+). The enzyme catalyses a ganglioside GD1a + UDP-N-acetyl-alpha-D-galactosamine = a ganglioside GalNAc-GD1a + UDP + H(+). It carries out the reaction a ganglioside GT3 (d18:1(4E)) + UDP-N-acetyl-alpha-D-galactosamine = a ganglioside GT2 (d18:1(4E)) + UDP + H(+). The catalysed reaction is a beta-D-Gal-(1-&gt;4)-beta-D-Glc-(1&lt;-&gt;1)-Cer(d18:1(4E)) + UDP-N-acetyl-alpha-D-galactosamine = a ganglioside GA2 (d18:1(4E)) + UDP + H(+). It catalyses the reaction a neolactoside IV(3)-alpha-NeuGc-nLc4Cer + UDP-N-acetyl-alpha-D-galactosamine = a neolactoside IV(4)-beta-GalNAc-IV(3)-alpha-NeuGc-nLc4Cer + UDP + H(+). Its pathway is sphingolipid metabolism. In terms of biological role, involved in the biosynthesis of gangliosides GM2, GD2 and GA2. Functionally, involved in the biosynthesis of gangliosides GM2, GD2, GT2 and GA2 from GM3, GD3, GT3 and GA3, respectively. The protein is Beta-1,4 N-acetylgalactosaminyltransferase 1 of Mus musculus (Mouse).